Consider the following 48-residue polypeptide: Large ribosomal subunit protein bL36c (48 aa).

The protein belongs to the bacterial ribosomal protein bL36 family.

Its subcellular location is the plastid. The protein resides in the chloroplast. This chain is Large ribosomal subunit protein bL36c, found in Rhodomonas salina (Cryptomonas salina).